Consider the following 287-residue polypeptide: PIH1 domain-containing protein 1 (287 aa).

The protein belongs to the PIH1 family.

It localises to the nucleus. Involved in the assembly of C/D box small nucleolar ribonucleoprotein (snoRNP) particles. Recruits the SWI/SNF complex to the core promoter of rRNA genes and enhances pre-rRNA transcription. Mediates interaction of TELO2 with the R2TP complex which is necessary for the stability of MTOR and SMG1. Positively regulates the assembly and activity of the mTORC1 complex. This is PIH1 domain-containing protein 1 (pih1d1) from Danio rerio (Zebrafish).